The chain runs to 174 residues: Flavodoxin (174 aa).

The 162-residue stretch at 4–165 folds into the Flavodoxin-like domain; that stretch reads VGLFYGSDTG…RVEKWCKQIY (162 aa).

The protein belongs to the flavodoxin family. Requires FMN as cofactor.

Low-potential electron donor to a number of redox enzymes. The chain is Flavodoxin (fldA) from Haemophilus influenzae (strain ATCC 51907 / DSM 11121 / KW20 / Rd).